A 321-amino-acid chain; its full sequence is Lipoyl synthase (321 aa).

7 residues coordinate [4Fe-4S] cluster: cysteine 68, cysteine 73, cysteine 79, cysteine 94, cysteine 98, cysteine 101, and serine 308. One can recognise a Radical SAM core domain in the interval 80-297 (FNHGTATFMI…KEIALELGFT (218 aa)).

This sequence belongs to the radical SAM superfamily. Lipoyl synthase family. Requires [4Fe-4S] cluster as cofactor.

The protein resides in the cytoplasm. It catalyses the reaction [[Fe-S] cluster scaffold protein carrying a second [4Fe-4S](2+) cluster] + N(6)-octanoyl-L-lysyl-[protein] + 2 oxidized [2Fe-2S]-[ferredoxin] + 2 S-adenosyl-L-methionine + 4 H(+) = [[Fe-S] cluster scaffold protein] + N(6)-[(R)-dihydrolipoyl]-L-lysyl-[protein] + 4 Fe(3+) + 2 hydrogen sulfide + 2 5'-deoxyadenosine + 2 L-methionine + 2 reduced [2Fe-2S]-[ferredoxin]. The protein operates within protein modification; protein lipoylation via endogenous pathway; protein N(6)-(lipoyl)lysine from octanoyl-[acyl-carrier-protein]: step 2/2. Functionally, catalyzes the radical-mediated insertion of two sulfur atoms into the C-6 and C-8 positions of the octanoyl moiety bound to the lipoyl domains of lipoate-dependent enzymes, thereby converting the octanoylated domains into lipoylated derivatives. This chain is Lipoyl synthase, found in Vibrio cholerae serotype O1 (strain ATCC 39541 / Classical Ogawa 395 / O395).